We begin with the raw amino-acid sequence, 210 residues long: Orotate phosphoribosyltransferase (210 aa).

5-phospho-alpha-D-ribose 1-diphosphate-binding positions include arginine 94, lysine 98, histidine 100, and glutamate 120–serine 128. Residue serine 124 coordinates orotate.

Belongs to the purine/pyrimidine phosphoribosyltransferase family. PyrE subfamily. Homodimer. Mg(2+) serves as cofactor.

The catalysed reaction is orotidine 5'-phosphate + diphosphate = orotate + 5-phospho-alpha-D-ribose 1-diphosphate. It participates in pyrimidine metabolism; UMP biosynthesis via de novo pathway; UMP from orotate: step 1/2. Its function is as follows. Catalyzes the transfer of a ribosyl phosphate group from 5-phosphoribose 1-diphosphate to orotate, leading to the formation of orotidine monophosphate (OMP). This is Orotate phosphoribosyltransferase from Bacillus cereus (strain B4264).